Reading from the N-terminus, the 515-residue chain is Pisatin demethylase (515 aa).

Cysteine 453 is a heme binding site.

This sequence belongs to the cytochrome P450 family. It depends on heme as a cofactor.

Can detoxify the phytoalexin pisatin from garden pea. Pisatin is an antimicrobial compound produced by pea in response to infection by plant pathogens. The protein is Pisatin demethylase (PDAT9) of Fusarium vanettenii (Neocosmospora pisi).